The primary structure comprises 407 residues: 12S rRNA N(4)-cytidine methyltransferase METTL15 (407 aa).

The tract at residues 44-63 (EAQEETDQTGIQELHRSQDR) is disordered. S-adenosyl-L-methionine is bound by residues 100 to 102 (GGH), Asp119, Phe146, Asp169, and Gln176. Ser358 carries the post-translational modification Phosphoserine. The segment at 386–407 (EDEDVQDNPRGRSAKLRAAIKL) is disordered. Residues 397–407 (RSAKLRAAIKL) are compositionally biased toward basic residues.

This sequence belongs to the methyltransferase superfamily. RsmH family.

The protein resides in the mitochondrion matrix. It catalyses the reaction cytidine(839) in 12S rRNA + S-adenosyl-L-methionine = N(4)-methylcytidine(839) in 12S rRNA + S-adenosyl-L-homocysteine + H(+). Functionally, N4-methylcytidine (m4C) methyltransferase responsible for the methylation of position C839 in mitochondrial 12S rRNA. Involved in the stabilization of 12S rRNA folding, therefore facilitating the assembly of the mitochondrial small ribosomal subunits. In Bos taurus (Bovine), this protein is 12S rRNA N(4)-cytidine methyltransferase METTL15 (METTL15).